The following is a 108-amino-acid chain: Replication restart protein PriB (108 aa).

In terms of domain architecture, SSB spans 8 to 108 (IDNSFSVMGV…LHAEQIEFID (101 aa)).

Belongs to the PriB family. In terms of assembly, homodimer. Interacts with PriA and DnaT. Component of the replication restart primosome. Primosome assembly occurs via a 'hand-off' mechanism. PriA binds to replication forks, subsequently PriB then DnaT bind; DnaT then displaces ssDNA to generate the helicase loading substrate.

Its function is as follows. Involved in the restart of stalled replication forks, which reloads the replicative helicase on sites other than the origin of replication; the PriA-PriB pathway is the major replication restart pathway. During primosome assembly it facilitates complex formation between PriA and DnaT on DNA; stabilizes PriA on DNA. Stimulates the DNA unwinding activity of PriA helicase. The polypeptide is Replication restart protein PriB (Haemophilus influenzae (strain ATCC 51907 / DSM 11121 / KW20 / Rd)).